A 79-amino-acid chain; its full sequence is uncharacterized protein (79 aa).

Transmembrane regions (helical) follow at residues 28-48 and 51-71; these read CIIL…ALLA and VALT…AFTV.

The protein resides in the cell membrane. This is an uncharacterized protein from Methanocaldococcus jannaschii (strain ATCC 43067 / DSM 2661 / JAL-1 / JCM 10045 / NBRC 100440) (Methanococcus jannaschii).